We begin with the raw amino-acid sequence, 151 residues long: uncharacterized protein (151 aa).

The 138-residue stretch at 6–143 (MKTLSAGIIF…QWQYVMGPSL (138 aa)) folds into the Nudix hydrolase domain.

This is an uncharacterized protein from Escherichia coli (Bacteriophage T4).